The sequence spans 123 residues: UPF0102 protein Cbei_1183 (123 aa).

The protein belongs to the UPF0102 family.

In Clostridium beijerinckii (strain ATCC 51743 / NCIMB 8052) (Clostridium acetobutylicum), this protein is UPF0102 protein Cbei_1183.